Here is a 292-residue protein sequence, read N- to C-terminus: Acetylglutamate kinase (292 aa).

Residues 64-65 (GG), Arg86, and Asn190 each bind substrate.

The protein belongs to the acetylglutamate kinase family. ArgB subfamily.

The protein resides in the cytoplasm. The enzyme catalyses N-acetyl-L-glutamate + ATP = N-acetyl-L-glutamyl 5-phosphate + ADP. It participates in amino-acid biosynthesis; L-arginine biosynthesis; N(2)-acetyl-L-ornithine from L-glutamate: step 2/4. In terms of biological role, catalyzes the ATP-dependent phosphorylation of N-acetyl-L-glutamate. The protein is Acetylglutamate kinase of Geotalea uraniireducens (strain Rf4) (Geobacter uraniireducens).